Consider the following 198-residue polypeptide: Anthranilate synthase component 2 (198 aa).

One can recognise a Glutamine amidotransferase type-1 domain in the interval 2–198 (LLMMIDNYDS…NFLKQTGGRR (197 aa)). 53–55 (GPC) provides a ligand contact to L-glutamine. The Nucleophile; for GATase activity role is filled by C80. L-glutamine is bound by residues Q84 and 130 to 131 (SL). Residues H174 and E176 each act as for GATase activity in the active site.

Heterotetramer consisting of two non-identical subunits: a beta subunit (TrpG) and a large alpha subunit (TrpE).

The catalysed reaction is chorismate + L-glutamine = anthranilate + pyruvate + L-glutamate + H(+). It functions in the pathway amino-acid biosynthesis; L-tryptophan biosynthesis; L-tryptophan from chorismate: step 1/5. Functionally, part of a heterotetrameric complex that catalyzes the two-step biosynthesis of anthranilate, an intermediate in the biosynthesis of L-tryptophan. In the first step, the glutamine-binding beta subunit (TrpG) of anthranilate synthase (AS) provides the glutamine amidotransferase activity which generates ammonia as a substrate that, along with chorismate, is used in the second step, catalyzed by the large alpha subunit of AS (TrpE) to produce anthranilate. In the absence of TrpG, TrpE can synthesize anthranilate directly from chorismate and high concentrations of ammonia. This Pseudomonas putida (Arthrobacter siderocapsulatus) protein is Anthranilate synthase component 2 (trpG).